A 341-amino-acid chain; its full sequence is UDP-3-O-acylglucosamine N-acyltransferase (341 aa).

His239 functions as the Proton acceptor in the catalytic mechanism.

It belongs to the transferase hexapeptide repeat family. LpxD subfamily. As to quaternary structure, homotrimer.

It catalyses the reaction a UDP-3-O-[(3R)-3-hydroxyacyl]-alpha-D-glucosamine + a (3R)-hydroxyacyl-[ACP] = a UDP-2-N,3-O-bis[(3R)-3-hydroxyacyl]-alpha-D-glucosamine + holo-[ACP] + H(+). It participates in bacterial outer membrane biogenesis; LPS lipid A biosynthesis. In terms of biological role, catalyzes the N-acylation of UDP-3-O-acylglucosamine using 3-hydroxyacyl-ACP as the acyl donor. Is involved in the biosynthesis of lipid A, a phosphorylated glycolipid that anchors the lipopolysaccharide to the outer membrane of the cell. In Photobacterium profundum (strain SS9), this protein is UDP-3-O-acylglucosamine N-acyltransferase.